Reading from the N-terminus, the 513-residue chain is ATP synthase subunit alpha (513 aa).

169–176 contacts ATP; that stretch reads GDRQTGKS.

Belongs to the ATPase alpha/beta chains family. F-type ATPases have 2 components, CF(1) - the catalytic core - and CF(0) - the membrane proton channel. CF(1) has five subunits: alpha(3), beta(3), gamma(1), delta(1), epsilon(1). CF(0) has three main subunits: a(1), b(2) and c(9-12). The alpha and beta chains form an alternating ring which encloses part of the gamma chain. CF(1) is attached to CF(0) by a central stalk formed by the gamma and epsilon chains, while a peripheral stalk is formed by the delta and b chains.

The protein resides in the cell inner membrane. It catalyses the reaction ATP + H2O + 4 H(+)(in) = ADP + phosphate + 5 H(+)(out). Its function is as follows. Produces ATP from ADP in the presence of a proton gradient across the membrane. The alpha chain is a regulatory subunit. The polypeptide is ATP synthase subunit alpha (Blochmanniella floridana).